Reading from the N-terminus, the 458-residue chain is MSTGKIIQVIGAVIDVEFARDNTPKVYDALNVVEAGLVLEVQQQIGDGVVRTIAMGSSDGLRRGMEVKNTNAPISVPVGHGTLGRIMNVLGEPIDEAGPIEYTEKRSIHQAPPAYDELALSTEILETGIKVVDLICPFAKGGKVGLFGGAGVGKTVTMMELINNIAKEHSGYSVFAGVGERTREGNDFYYEMKDSNVLDKVSLVYGQMNEPPGNRLRVALSGLTIAEGFRDEKRDVLMFIDNIYRYTLAGTEVSALLGRMPSAVGYQPTLAAEMGALQERITSTKTGSITSVQAVYVPADDLTDPSPATTFSHLDATIVLSRQIAELGIYPAVDPLDSTSRQLDPLVVGQEHYETARAVQKVLQRYKELKDIIAILGMDELSDEDKKIVDRARKIQRFLSQPFHVAEVFTGNPGKFVSLKDTVASFKAIVNGEYDHLPEQAFYMVGSIQEAIEKAKTL.

ATP is bound at residue 148 to 155 (GGAGVGKT).

This sequence belongs to the ATPase alpha/beta chains family. F-type ATPases have 2 components, CF(1) - the catalytic core - and CF(0) - the membrane proton channel. CF(1) has five subunits: alpha(3), beta(3), gamma(1), delta(1), epsilon(1). CF(0) has three main subunits: a(1), b(2) and c(9-12). The alpha and beta chains form an alternating ring which encloses part of the gamma chain. CF(1) is attached to CF(0) by a central stalk formed by the gamma and epsilon chains, while a peripheral stalk is formed by the delta and b chains.

The protein resides in the cell inner membrane. The enzyme catalyses ATP + H2O + 4 H(+)(in) = ADP + phosphate + 5 H(+)(out). In terms of biological role, produces ATP from ADP in the presence of a proton gradient across the membrane. The catalytic sites are hosted primarily by the beta subunits. In Francisella tularensis subsp. novicida (strain U112), this protein is ATP synthase subunit beta.